Reading from the N-terminus, the 590-residue chain is Dystrobrevin-1 (590 aa).

Residues 1–10 (MLWSNGGGGP) are compositionally biased toward gly residues. The tract at residues 1–25 (MLWSNGGGGPREPSSAPSPDHHRAM) is disordered. The ZZ-type zinc-finger motif lies at 259–315 (YHPVVCDACQVRSFTGFRYKCQRCANYQLCQSCFWRGRTSQNHSNEHEMKEYSSYKS). Zn(2+) is bound by residues Cys-264, Cys-267, Cys-279, Cys-282, Cys-288, Cys-291, His-301, and His-305. The stretch at 434–508 (SMVGDERTLI…EHLMAQLNTG (75 aa)) forms a coiled coil. The essential for interaction with ctn-1 stretch occupies residues 468-590 (DGLAGLRDRK…DENGVTINGF (123 aa)). The essential for interaction with dys-1 stretch occupies residues 484 to 490 (MFEMQQR).

Belongs to the dystrophin family. Dystrobrevin subfamily. In terms of assembly, component of the dystrophin glycoprotein complex (DGC). Interacts with dystrophin (dys-1) and syntrophin (stn-1) to form the DGC. Interacts (via C-terminus) with ctn-1 (via N-terminus); the interaction is required for localization of the dystrophin complex and ctn-1 near dense bodies in muscle cells. As to expression, from late embryogenesis to adulthood, expressed in neurons and muscles; particularly strong in the ventral nerve cord and in muscles of the body wall, head pharyngeal, and vulva; weaker in the intestinal muscle (at protein level).

It localises to the cytoplasm. Functionally, plays a role in cholinergic transmission and as a functional partner of dystrophin (dys-1), necessary for muscle maintenance. Required for localization of ctn-1 near dense bodies in muscle cells. The chain is Dystrobrevin-1 from Caenorhabditis elegans.